Reading from the N-terminus, the 187-residue chain is Major allergen Equ c 1 (187 aa).

The segment at residues 1-15 is a signal peptide (or 16, or 21); the sequence is MKLLLLCLGLILVCA. N-linked (GlcNAc...) asparagine glycans are attached at residues asparagine 53 and asparagine 68. The cysteines at positions 83 and 176 are disulfide-linked.

It belongs to the calycin superfamily. Lipocalin family. As to quaternary structure, homodimer. Several N-terminal ends may be due to cleavage by signal peptidase at different sites or may be generated by proteolytic processing of the secreted protein. In terms of processing, analysis of the sugar composition shows the presence of GalNAc, Gal, NeuAc, GlcNAc, and Man. May be also O-glycosylated. Expressed in liver and in sublingual and submaxillary salivary glands. Highly concentrated in secretory fluid such as saliva and urine as well as in hair dandruff extract.

It is found in the secreted. The chain is Major allergen Equ c 1 from Equus caballus (Horse).